The sequence spans 102 residues: Small ribosomal subunit protein uS10 (102 aa).

The protein belongs to the universal ribosomal protein uS10 family. Part of the 30S ribosomal subunit.

Its function is as follows. Involved in the binding of tRNA to the ribosomes. This is Small ribosomal subunit protein uS10 from Streptococcus sanguinis (strain SK36).